The primary structure comprises 645 residues: MSQVHIHPVPADYKKQTLMDRETYDRWYSQSINDPGTFWAERAEQLLDWKTPWDTVSEWDFNEGRAAWFKGATLNACYNCVDRHLPERANQTAIIWEGDEPDQDKHISYQQLFEEVSKFGNVLKNRGVKKGDRVVIYMPMIPEAAYAMLACARIGAIHSVVFGGFSPEALKDRILNAEACALITADEGVRGGKTIPLKVNADKALDGIDCVHTCLTVKRTGGDVDWQAPRDVWYHEAMADASSDCEPEWVEAEDPLFTLYTSGSTGKPKGVVHTTAGYLLNTALTHKYVFDYQDGDIYWCTADVGWITGHSYIVYGPLANGATTLMFEGVPTYPDASRCWQVVDKHKVNIFYTAPTAIRALMGLGDAPVEQTSRASLKLLGTVGEPINPEAWEWYYRVVGDSRCPIVDTWWQTETGAIMIAPLPGAVDLKAGSATLPMFGVQPGLMDPDGNELDGAASGNLVLKASWPSQIRTVYGDHQRLIDTYFSAYKGCYFTGDGARRDEDGYYWITGRVDDVLNVSGHRLGTAEIESALVLHPSISEAAVVGYQHDVKGQGIYAYVSLMAGKEGSEELVKALRDLVTQEIGPIAKPDLIHFAPGLPKTRSGKIMRRILRKIAADELDSLGDTSTLADPSVVDQLIDNRQNK.

CoA-binding positions include 190–193 and T308; that span reads RGGK. ATP-binding positions include 384–386, 408–413, D497, and R512; these read GEP and DTWWQT. S520 serves as a coordination point for CoA. Position 523 (R523) interacts with ATP. Mg(2+)-binding residues include V534, H536, and I539. K606 carries the N6-acetyllysine modification.

This sequence belongs to the ATP-dependent AMP-binding enzyme family. Requires Mg(2+) as cofactor. Acetylated. Deacetylation by the SIR2-homolog deacetylase activates the enzyme.

It catalyses the reaction acetate + ATP + CoA = acetyl-CoA + AMP + diphosphate. Catalyzes the conversion of acetate into acetyl-CoA (AcCoA), an essential intermediate at the junction of anabolic and catabolic pathways. AcsA undergoes a two-step reaction. In the first half reaction, AcsA combines acetate with ATP to form acetyl-adenylate (AcAMP) intermediate. In the second half reaction, it can then transfer the acetyl group from AcAMP to the sulfhydryl group of CoA, forming the product AcCoA. The protein is Acetyl-coenzyme A synthetase of Alcanivorax borkumensis (strain ATCC 700651 / DSM 11573 / NCIMB 13689 / SK2).